The primary structure comprises 427 residues: C4-dicarboxylate TRAP transporter large permease protein DctM (427 aa).

Helical transmembrane passes span 2-22 (TILF…PIAV), 55-75 (TLLA…GGVA), 91-111 (GGLA…SGSS), 115-135 (VAAV…PQAF), 138-158 (GIVC…VMVV), 171-191 (FIAG…VIYI), 216-236 (ALWG…GAFT), 237-257 (PTEA…FVYR), 274-294 (LTIM…VLTT), 310-330 (LSPW…GNFM), 335-355 (IILI…IDPI), 359-379 (IIMV…LNLF), and 396-416 (ALPW…IPAV).

This sequence belongs to the TRAP transporter large permease family. In terms of assembly, the complex comprises the extracytoplasmic solute receptor protein DctP, and the two transmembrane proteins DctQ and DctM.

The protein localises to the cell inner membrane. In terms of biological role, part of the tripartite ATP-independent periplasmic (TRAP) transport system DctPQM involved in C4-dicarboxylates uptake. This Pseudomonas aeruginosa (strain ATCC 15692 / DSM 22644 / CIP 104116 / JCM 14847 / LMG 12228 / 1C / PRS 101 / PAO1) protein is C4-dicarboxylate TRAP transporter large permease protein DctM.